We begin with the raw amino-acid sequence, 763 residues long: Phosphoglycerol transferase I (763 aa).

A run of 4 helical transmembrane segments spans residues 1–21, 26–46, 77–97, and 108–128; these read MSEL…AWKA, WWFA…ITLY, ILPG…LGWV, and VGYS…SPAF.

It belongs to the OpgB family.

It localises to the cell inner membrane. The catalysed reaction is a phosphatidylglycerol + a membrane-derived-oligosaccharide D-glucose = a 1,2-diacyl-sn-glycerol + a membrane-derived-oligosaccharide 6-(glycerophospho)-D-glucose.. The protein operates within glycan metabolism; osmoregulated periplasmic glucan (OPG) biosynthesis. Its function is as follows. Transfers a phosphoglycerol residue from phosphatidylglycerol to the membrane-bound nascent glucan backbones. The protein is Phosphoglycerol transferase I of Salmonella schwarzengrund (strain CVM19633).